We begin with the raw amino-acid sequence, 91 residues long: Late embryogenesis abundant protein EMB564 (91 aa).

Composition is skewed to basic and acidic residues over residues 1–19 and 32–51; these read MASG…REGE and EAQE…RREQ. The disordered stretch occupies residues 1–91; that stretch reads MASGQESRKE…VTIDESKFTK (91 aa).

Belongs to the small hydrophilic plant seed protein family.

In terms of biological role, LEA proteins are late embryonic proteins abundant in higher plant seed embryos. They may play an essential role in seed survival and in controlling water exchanges during seed desiccation and imbibition. This is Late embryogenesis abundant protein EMB564 from Zea mays (Maize).